The primary structure comprises 333 residues: Squamosa promoter-binding-like protein 8 (333 aa).

The disordered stretch occupies residues 1 to 28 (MLDYEWDNPSSIVLSGDERNPDSDPTRS). The span at 16–25 (GDERNPDSDP) shows a compositional bias: basic and acidic residues. A sufficient and necessary for DNA binding region spans residues 179-269 (MANSLSTPRC…RKCHQSASAT (91 aa)). The SBP-type zinc finger occupies 185 to 262 (TPRCQAEGCN…ADHNRRRRKC (78 aa)). Residues C188, C193, C210, H213, C229, C232, H236, and C248 each coordinate Zn(2+). Positions 245–261 (KRSCRKRLADHNRRRRK) match the Bipartite nuclear localization signal motif. 2 disordered regions span residues 254 to 303 (DHNR…TISL) and 314 to 333 (TASSSTSASSSSNSMFFSSG). Over residues 264 to 284 (QSASATQDTGTGKTTPKSPND) the composition is skewed to polar residues. The segment covering 289 to 299 (ASSSPSSNAPP) has biased composition (low complexity).

Zn(2+) is required as a cofactor. As to expression, expressed in shoot apical region and early floral tissues. Transcripts levels increase in developing pollen sacs, and decrease in later stage of anther development. Strongly expressed in the placental region of the carpels.

Its subcellular location is the nucleus. The protein resides in the cytoplasm. Trans-acting factor that binds specifically to the consensus nucleotide sequence 5'-TNCGTACAA-3'. Binds specifically to the 5'-GTAC-3' core sequence. Involved in development and floral organogenesis. Required for ovule differentiation, pollen production, filament elongation, seed formation and siliques elongation. Also seems to play a role in the formation of trichomes on sepals. May positively modulate gibberellin (GA) signaling in flower. The sequence is that of Squamosa promoter-binding-like protein 8 (SPL8) from Arabidopsis thaliana (Mouse-ear cress).